Here is a 107-residue protein sequence, read N- to C-terminus: Putative double-stranded DNA mimic protein ECA2319 (107 aa).

It belongs to the putative dsDNA mimic protein family.

In terms of biological role, may act as a double-stranded DNA (dsDNA) mimic. Probably regulates the activity of a dsDNA-binding protein. This is Putative double-stranded DNA mimic protein ECA2319 from Pectobacterium atrosepticum (strain SCRI 1043 / ATCC BAA-672) (Erwinia carotovora subsp. atroseptica).